Here is a 1058-residue protein sequence, read N- to C-terminus: Protein argonaute MEL1 (1058 aa).

Composition is skewed to gly residues over residues 1–12 (MAYRGGGRGGRG) and 24–37 (DVPG…GGGA). Disordered regions lie at residues 1–77 (MAYR…YGAP) and 115–147 (RAPP…PSAT). The segment covering 48 to 70 (WPPPGMTPRPGPPQPQYPRPGPP) has biased composition (pro residues). The span at 121–147 (HSSAPAPYQPAAAAPAPSSSSTAPSAT) shows a compositional bias: low complexity. Residues 407-520 (TVIQFVEEFL…LPMEVCKIVE (114 aa)) form the PAZ domain. The region spanning 696–1016 (LLIVILPEVS…AAFRARYYVE (321 aa)) is the Piwi domain.

Belongs to the argonaute family. Ago subfamily.

The protein localises to the nucleus. Its subcellular location is the nucleolus. Functionally, essential for the progression of premeiotic mitosis and meiosis during sporogenesis. Regulates the cell division of premeiotic germ cells, the proper modification of meiotic chromosomes, and the faithful progression of meiosis, probably via small RNA-mediated gene silencing. May be involved in histone H3 'Lys-9' demethylation in the pericentromeric region. The protein is Protein argonaute MEL1 (MEL1) of Oryza sativa subsp. japonica (Rice).